The sequence spans 72 residues: Translation initiation factor IF-1 1 (72 aa).

The S1-like domain occupies 1–72 (MAKDDVIQMQ…SRARIVFRAK (72 aa)).

This sequence belongs to the IF-1 family. In terms of assembly, component of the 30S ribosomal translation pre-initiation complex which assembles on the 30S ribosome in the order IF-2 and IF-3, IF-1 and N-formylmethionyl-tRNA(fMet); mRNA recruitment can occur at any time during PIC assembly.

The protein localises to the cytoplasm. Its function is as follows. One of the essential components for the initiation of protein synthesis. Stabilizes the binding of IF-2 and IF-3 on the 30S subunit to which N-formylmethionyl-tRNA(fMet) subsequently binds. Helps modulate mRNA selection, yielding the 30S pre-initiation complex (PIC). Upon addition of the 50S ribosomal subunit IF-1, IF-2 and IF-3 are released leaving the mature 70S translation initiation complex. The protein is Translation initiation factor IF-1 1 of Ralstonia nicotianae (strain ATCC BAA-1114 / GMI1000) (Ralstonia solanacearum).